A 228-amino-acid polypeptide reads, in one-letter code: Aspartyl protease inhibitor (228 aa).

Positions 1-15 (MKLIELCVLCAIAFA) are cleaved as a signal peptide. Basic and acidic residues predominate over residues 88-112 (KLKSRMSGKKEEKAAVTSTKDEDLP). A disordered region spans residues 88 to 119 (KLKSRMSGKKEEKAAVTSTKDEDLPKPPQKPS). A disulfide bond links cysteine 134 and cysteine 224.

Belongs to the protease inhibitor I33 family.

It is found in the secreted. Functionally, aspartyl protease inhibitor. This is Aspartyl protease inhibitor from Trichostrongylus colubriformis (Black scour worm).